Consider the following 225-residue polypeptide: MTARPLSELIDDGWASALAPVESQVTQMGEFLRAELADGHRYLPAGENVLRAFTFPLEKVRVLIVGQDPYPTPGHAVGLSFSVAPDVRPLPRSLDNIFREYREDLGYPTPSTGDLTPWCEQGVMLLNRVLTVRPGTPASHRGKGWEPVTECAIRALVARQQPMVAVLWGRDASTLKPMLGDTAVIESPHPSPLSASRGFFGSKPFSRANELLTQMGAEPVDWRLP.

The Proton acceptor role is filled by Asp-68.

It belongs to the uracil-DNA glycosylase (UDG) superfamily. UNG family.

It localises to the cytoplasm. The enzyme catalyses Hydrolyzes single-stranded DNA or mismatched double-stranded DNA and polynucleotides, releasing free uracil.. Its function is as follows. Excises uracil residues from the DNA which can arise as a result of misincorporation of dUMP residues by DNA polymerase or due to deamination of cytosine. The polypeptide is Uracil-DNA glycosylase (Mycolicibacterium vanbaalenii (strain DSM 7251 / JCM 13017 / BCRC 16820 / KCTC 9966 / NRRL B-24157 / PYR-1) (Mycobacterium vanbaalenii)).